Here is a 351-residue protein sequence, read N- to C-terminus: Rhodopsin (351 aa).

At 1–36 (MNGTEGPFFYIPMSNATGLVRSPYDYPQYYLVPPWG) the chain is on the extracellular side. 2 N-linked (GlcNAc...) asparagine glycosylation sites follow: Asn2 and Asn15. The helical transmembrane segment at 37 to 61 (YACLAAYMFLLILTGFPVNFLTLYV) threads the bilayer. At 62-73 (TIEHKKLRSPLN) the chain is on the cytoplasmic side. Residues 74-96 (YILLNLAVADLFMVIGGFTTTMW) form a helical membrane-spanning segment. At 97 to 110 (TSLNGYFVFGRMGC) the chain is on the extracellular side. The cysteines at positions 110 and 187 are disulfide-linked. A helical membrane pass occupies residues 111 to 133 (NIEGFFATLGGEIALWSLVVLSM). The 'Ionic lock' involved in activated form stabilization motif lies at 134–136 (ERW). The Cytoplasmic segment spans residues 134 to 152 (ERWIVVCKPISNFRFGENH). A helical transmembrane segment spans residues 153-173 (AVMGVAFSWFMAAACAVPPLV). The Extracellular portion of the chain corresponds to 174-202 (GWSRYIPEGMQCSCGIDYYTRAEGFNNES). Asn200 carries an N-linked (GlcNAc...) asparagine glycan. Residues 203 to 224 (FVIYMFVVHFTCPLTIITFCYG) form a helical membrane-spanning segment. Residues 225–252 (RLVCTVKEAAAQQQESETTQRAEREVTR) are Cytoplasmic-facing. Residues 253 to 274 (MVIIMFVAFLACWVPYASVAWY) traverse the membrane as a helical segment. At 275 to 286 (IFTHQGSEFGPV) the chain is on the extracellular side. Residues 287–308 (FMTIPAFFAKSSAVYNPVIYIC) traverse the membrane as a helical segment. An N6-(retinylidene)lysine modification is found at Lys296. The Cytoplasmic portion of the chain corresponds to 309–351 (LNKQFRHCMITTLCCGKNPFEEEEGSTTASKTEASSVCSVSPA). Residues Cys322 and Cys323 are each lipidated (S-palmitoyl cysteine). Residues 330 to 351 (EEEGSTTASKTEASSVCSVSPA) are disordered. The segment covering 334-351 (STTASKTEASSVCSVSPA) has biased composition (polar residues).

This sequence belongs to the G-protein coupled receptor 1 family. Opsin subfamily. In terms of processing, phosphorylated on some or all of the serine and threonine residues present in the C-terminal region. Post-translationally, contains one covalently linked retinal chromophore.

The protein resides in the membrane. It is found in the cell projection. The protein localises to the cilium. Its subcellular location is the photoreceptor outer segment. Photoreceptor required for image-forming vision at low light intensity. While most salt water fish species use retinal as chromophore, most freshwater fish use 3-dehydroretinal, or a mixture of retinal and 3-dehydroretinal. Light-induced isomerization of 11-cis to all-trans retinal triggers a conformational change that activates signaling via G-proteins. Subsequent receptor phosphorylation mediates displacement of the bound G-protein alpha subunit by arrestin and terminates signaling. This is Rhodopsin (rho) from Sardina pilchardus (European pilchard).